Reading from the N-terminus, the 238-residue chain is Opacity protein opA60 (238 aa).

Ala-1 is a signal peptide.

Belongs to the opacity porin family.

The protein localises to the cell outer membrane. Implicated in a number of adherence functions. OPA proteins are implicated in pathogenesis and are subject to phase variation. The sequence is that of Opacity protein opA60 (opaH) from Neisseria gonorrhoeae.